A 322-amino-acid chain; its full sequence is GTP 3',8-cyclase (322 aa).

Positions 4-229 (NFNRNIDYLR…IPVQMKKSGP (226 aa)) constitute a Radical SAM core domain. Arginine 13 contributes to the GTP binding site. [4Fe-4S] cluster is bound by residues cysteine 20 and cysteine 24. Tyrosine 26 lines the S-adenosyl-L-methionine pocket. Cysteine 27 contributes to the [4Fe-4S] cluster binding site. Arginine 64 contacts GTP. Glycine 68 provides a ligand contact to S-adenosyl-L-methionine. Position 95 (threonine 95) interacts with GTP. Serine 119 lines the S-adenosyl-L-methionine pocket. Lysine 156 lines the GTP pocket. Methionine 190 is an S-adenosyl-L-methionine binding site. 2 residues coordinate [4Fe-4S] cluster: cysteine 253 and cysteine 256. Residue 258–260 (RLR) coordinates GTP. Cysteine 270 is a binding site for [4Fe-4S] cluster.

The protein belongs to the radical SAM superfamily. MoaA family. As to quaternary structure, monomer and homodimer. [4Fe-4S] cluster serves as cofactor.

It carries out the reaction GTP + AH2 + S-adenosyl-L-methionine = (8S)-3',8-cyclo-7,8-dihydroguanosine 5'-triphosphate + 5'-deoxyadenosine + L-methionine + A + H(+). The protein operates within cofactor biosynthesis; molybdopterin biosynthesis. In terms of biological role, catalyzes the cyclization of GTP to (8S)-3',8-cyclo-7,8-dihydroguanosine 5'-triphosphate. The sequence is that of GTP 3',8-cyclase from Thermodesulfovibrio yellowstonii (strain ATCC 51303 / DSM 11347 / YP87).